The sequence spans 120 residues: SPbeta prophage-derived DSR anti-defense 1 (120 aa).

The protein belongs to the DSR anti-defense 1 family. In terms of assembly, interacts with Bacillus subtilis DSR2 (via C-terminus) in a 2:4 ratio; this interaction leads to the absence of activation of the NADase defense activity of DSR2.

In terms of biological role, counteracts the defense-associated sirtuin 2 (DSR2) defense system of the host. Inhibits the NADase activity of host DSR2 by competing with the tail tube protein that normally activates DSR2. This Bacillus subtilis (strain 168) protein is SPbeta prophage-derived DSR anti-defense 1 (yotI).